A 1217-amino-acid chain; its full sequence is MYIKQVIIQGFRSYRDQTIVDPFSSKHNVIVGRNGSGKSNFFYAIQFVLSDEFSHLRPEQRLALLHEGTGPRVISAFVEIIFDNSDNRLPIDKEEVSLRRVIGAKKDQYFLDKKMVTKNDVMNLLESAGFSRSNPYYIVKQGKINQMATAPDSQRLKLLREVAGTRVYDERKEESISLMKETEGKREKINELLKYIEERLHTLEEEKEELAQYQKWDKMRRALEYTIYNQELNETRAKLDELSAKRETSGEKSRQLRDAQQDARDKMEDIERQVRELKTKISAMKEEKEQLSAERQEQIKQRTKLELKAKDLQDELAGNSEQRKRLLKERQKLLEKIEEKQKELAETEPKFNSVKEKEERGIARLAQATQERTDLYAKQGRGSQFTSKEERDKWIKKELKSLDQAINDKKRQIAAIHKDLEDTEANKEKNLEQYNKLDQDLNEVKARVEELDRKYYEVKNKKDELQSERNYLWREENAEQQALAAKREDLEKKQQLLRAATGKAILNGIDSINKVLEHFRRKGINQHVQNGYHGIVMNNFECEPAFYTCVEVTAGNRLFYHIVDSDEVSTKILMEFNKMNLPGEVTFLPLNKLDVRDTAYPETNDAIPMISKLRYNPRFDKAFKHVFGKTLICRSMEVSTQLARAFTMDCITLEGDQVSHRGALTGGYYDTRKSRLELQKDVRKAEEELGELEAKLNENLRRNIERINNEIDQLMNQMQQIETQQRKFKASRDSILSEMKMLKEKRQQSEKTFMPKQRSLQSLEASLHAMESTRESLKAELGTDLLSQLSLEDQKRVDALNDEIRQLQQENRQLLNERIKLEGIITRVETYLNENLRKRLDQVEQELNELRETEGGTVLTATTSELEAINKRVKDTMARSEDLDNSIDKTEAGIKELQKSMERWKNMEKEHMDAINHDTKELEKMTNRQGMLLKKKEECMKKIRELGSLPQEAFEKYQTLSLKQLFRKLEQCNTELKKYSHVNKKALDQFVNFSEQKEKLIKRQEELDRGYKSIMELMNVLELRKYEAIQLTFKQVSKNFSEVFQKLVPGGKATLVMKKGDVEGSQSQDEGEGSGESERGSGSQSSVPSVDQFTGVGIRVSFTGKQGEMREMQQLSGGQKSLVALALIFAIQKCDPAPFYLFDEIDQALDAQHRKAVSDMIMELAVHAQFITTTFRPELLESADKFYGVKFRNKVSHIDVITAEMAKDFVEDDTTHG.

Position 32 to 39 (32 to 39 (GRNGSGKS)) interacts with ATP. N6-acetyllysine is present on residues K105, K106, and K140. Coiled-coil stretches lie at residues 179–350 (MKET…TEPK) and 393–503 (KWIK…ATGK). Positions 242-268 (LSAKRETSGEKSRQLRDAQQDARDKME) are disordered. In terms of domain architecture, SMC hinge spans 530–642 (NGYHGIVMNN…CRSMEVSTQL (113 aa)). 2 coiled-coil regions span residues 669 to 916 (YDTR…DAIN) and 958 to 989 (QTLS…ALDQ). Residue T783 is modified to Phosphothreonine. Phosphoserine is present on residues S787 and S886. S1013, S1065, S1067, S1074, and S1083 each carry phosphoserine. A disordered region spans residues 1059–1090 (KGDVEGSQSQDEGEGSGESERGSGSQSSVPSV). Residue K1190 is modified to N6-acetyllysine.

It belongs to the SMC family. SMC3 subfamily. As to quaternary structure, forms a heterodimer with SMC1A or SMC1B in cohesin complexes. Cohesin complexes are composed of the SMC1 (SMC1A or SMC1B) and SMC3 heterodimer attached via their SMC hinge domain, RAD21 which link them, and one STAG protein (STAG1, STAG2 or STAG3), which interacts with RAD21. Also found in meiosis-specific cohesin complexes. Found in a complex with SMC1A, CDCA5 and RAD21, PDS5A/SCC-112 and PDS5B/APRIN. Interacts with PDS5A and WAPL; regulated by SMC3 acetylation. Interacts with NUMA1, and forms a ternary complex with KIF3B and KIFAP3, suggesting a function in tethering the chromosomes to the spindle pole and a function in chromosome movement. Interacts with SYCP2 and RPGR. Interacts (via SMC hinge domain) with KIAA1328 (via N- and C-terminal domains). Interacts with DDX11. The cohesin complex interacts with the cohesin loading complex subunits NIPBL/Scc2 (via HEAT repeats) and MAU2/Scc4. NIPBL directly contacts all members of the complex, RAD21, SMC1A/B, SMC3 and STAG1. Interacts with MXI1, MXD3 and MXD4. Interacts with STAG3. Interacts with the NuRD complex component HDAC2; the interaction is direct. Phosphorylated at Ser-1083 in a SPO11-dependent manner. In terms of processing, acetylation at Lys-105 and Lys-106 by ESCO1 is important for genome stability and S phase sister chromatid cohesion. Regulated by DSCC1, it is required for processive DNA synthesis, coupling sister chromatid cohesion establishment during S phase to DNA replication. Deacetylation by HDAC8, regulates release of the cohesin complex from chromatin. Post-translationally, ubiquitinated by the DCX(DCAF15) complex, leading to its degradation. Spermatocytes (at protein level). Widely expressed, with higher expression in testis and brain.

The protein resides in the nucleus. The protein localises to the chromosome. It is found in the centromere. In terms of biological role, central component of cohesin, a complex required for chromosome cohesion during the cell cycle. The cohesin complex may form a large proteinaceous ring within which sister chromatids can be trapped. At anaphase, the complex is cleaved and dissociates from chromatin, allowing sister chromatids to segregate. Cohesion is coupled to DNA replication and is involved in DNA repair. The cohesin complex also plays an important role in spindle pole assembly during mitosis and in chromosomes movement. In Mus musculus (Mouse), this protein is Structural maintenance of chromosomes protein 3 (Smc3).